We begin with the raw amino-acid sequence, 305 residues long: UDP-3-O-acyl-N-acetylglucosamine deacetylase (305 aa).

Zn(2+) contacts are provided by His79, His238, and Asp242. The Proton donor role is filled by His265.

It belongs to the LpxC family. It depends on Zn(2+) as a cofactor.

The catalysed reaction is a UDP-3-O-[(3R)-3-hydroxyacyl]-N-acetyl-alpha-D-glucosamine + H2O = a UDP-3-O-[(3R)-3-hydroxyacyl]-alpha-D-glucosamine + acetate. It participates in glycolipid biosynthesis; lipid IV(A) biosynthesis; lipid IV(A) from (3R)-3-hydroxytetradecanoyl-[acyl-carrier-protein] and UDP-N-acetyl-alpha-D-glucosamine: step 2/6. In terms of biological role, catalyzes the hydrolysis of UDP-3-O-myristoyl-N-acetylglucosamine to form UDP-3-O-myristoylglucosamine and acetate, the committed step in lipid A biosynthesis. The chain is UDP-3-O-acyl-N-acetylglucosamine deacetylase from Pectobacterium atrosepticum (strain SCRI 1043 / ATCC BAA-672) (Erwinia carotovora subsp. atroseptica).